We begin with the raw amino-acid sequence, 281 residues long: MDYKDNSLKTLKLGQKTDYIANYDRTLLQPVPRALNRDGLGITKQQPFSVGADIWTAYEISWLNIKGLPQVAIADVEIDYRSTNLIESKSFKLYLNSFNQTKFSDMSEVQRTISEDLSICAEGNVRVQLHSLSNYSHERIADFAGECLDELDIEISDYGFNAEILQNCTALSTEIVEETLVSHLLKSNCLITSQPDWGSVQIHYQGKRIDHEKLLRYLVSFRQHNEFHEQCVERIYCDIMKYARPEKLTVYARYTRRGGLDINPFRSNFEAIPQNLRLARQ.

86–88 contacts substrate; it reads IES. Residue 88–89 participates in NADPH binding; it reads SK. The Thioimide intermediate role is filled by C189. The Proton donor role is filled by D196. A substrate-binding site is contributed by 228-229; that stretch reads HE. 257-258 serves as a coordination point for NADPH; sequence RG.

Belongs to the GTP cyclohydrolase I family. QueF type 2 subfamily. As to quaternary structure, homodimer.

The protein localises to the cytoplasm. It catalyses the reaction 7-aminomethyl-7-carbaguanine + 2 NADP(+) = 7-cyano-7-deazaguanine + 2 NADPH + 3 H(+). Its pathway is tRNA modification; tRNA-queuosine biosynthesis. Its function is as follows. Catalyzes the NADPH-dependent reduction of 7-cyano-7-deazaguanine (preQ0) to 7-aminomethyl-7-deazaguanine (preQ1). The protein is NADPH-dependent 7-cyano-7-deazaguanine reductase of Mannheimia succiniciproducens (strain KCTC 0769BP / MBEL55E).